The following is a 186-amino-acid chain: Intraflagellar transport protein 27 homolog (186 aa).

GTP is bound by residues 12–19 (GDPAVGKT), 64–68 (DSAGK), and 123–126 (NKTD).

It belongs to the small GTPase superfamily. Rab family. Component of the IFT complex B, at least composed of IFT20, IFT25, IFT27, IFT52, IFT57, IFT74, IFT81, IFT88 and TRAF3IP1. Interacts with IFT25. Interacts with IFT70B. Interacts with RABL2/RABL2A; binding is equal in the presence of GTP or GDP. Interacts with ARL6; recognizes and binds with the GTP-free form of ARL6.

Its subcellular location is the cell projection. It is found in the cilium. It localises to the cytoplasm. The protein localises to the flagellum. Small GTPase-like component of the intraflagellar transport (IFT) complex B that promotes the exit of the BBSome complex from cilia via its interaction with ARL6. Not involved in entry of the BBSome complex into cilium. Prevents aggregation of GTP-free ARL6. Required for hedgehog signaling. Forms a subcomplex within the IFT complex B with IFT25. Its role in intraflagellar transport is mainly seen in tissues rich in ciliated cells such as kidney and testis. Essential for male fertility, spermiogenesis and sperm flagella formation. Plays a role in the early development of the kidney. May be involved in the regulation of ureteric bud initiation. This is Intraflagellar transport protein 27 homolog (IFT27) from Homo sapiens (Human).